Reading from the N-terminus, the 589-residue chain is Mediator of RNA polymerase II transcription subunit 26 (589 aa).

The region spanning 10–87 (QMRDRLLQAI…RNWQKLIEPG (78 aa)) is the TFIIS N-terminal domain. 3 disordered regions span residues 83-233 (LIEP…TKLP), 247-320 (ARVD…DGPS), and 363-441 (LETK…PIPE). Basic and acidic residues predominate over residues 190–213 (LLEKDDEVPSDRIRLEHLDNDRHN). Positions 259 to 268 (SPRYSSSPRS) are enriched in low complexity. Residues 276–297 (KRSTTYAPKGTLSSPSLNSAQV) show a composition bias toward polar residues. Composition is skewed to basic and acidic residues over residues 398–412 (SEDR…RRLT) and 424–435 (TPKESHQEEECH).

Belongs to the Mediator complex subunit 26 family. As to quaternary structure, component of the Mediator complex.

Its subcellular location is the nucleus. Its function is as follows. Component of the Mediator complex, a coactivator involved in the regulated transcription of nearly all RNA polymerase II-dependent genes. Mediator functions as a bridge to convey information from gene-specific regulatory proteins to the basal RNA polymerase II transcription machinery. Mediator is recruited to promoters by direct interactions with regulatory proteins and serves as a scaffold for the assembly of a functional preinitiation complex with RNA polymerase II and the general transcription factors. The protein is Mediator of RNA polymerase II transcription subunit 26 (med26) of Danio rerio (Zebrafish).